The sequence spans 235 residues: Type II secretion system protein N (235 aa).

Topologically, residues 1–34 are cytoplasmic; it reads MIPRRSSDITIKTRSDVLPFSGASSRWLQRYAPA. The helical; Signal-anchor for type II membrane protein transmembrane segment at 35-55 threads the bilayer; sequence LLAVALIIAMSISLAWQAAGW. At 56 to 235 the chain is on the periplasmic side; the sequence is LRLQRSPVAV…EPTTTPTESD (180 aa). Residues 205–235 form a disordered region; sequence DALRQQMEATPIAEPAEEDSSEPTTTPTESD. Residues 226–235 are compositionally biased toward low complexity; sequence EPTTTPTESD.

It localises to the cell inner membrane. Functionally, involved in a type II secretion system (T2SS, formerly general secretion pathway, GSP) for the export of proteins. Required for the translocation of a variety of enzymes across the outer membrane. This is Type II secretion system protein N (xcpP) from Pseudomonas aeruginosa (strain ATCC 15692 / DSM 22644 / CIP 104116 / JCM 14847 / LMG 12228 / 1C / PRS 101 / PAO1).